The following is a 195-amino-acid chain: Probable nicotinate-nucleotide adenylyltransferase (195 aa).

Belongs to the NadD family.

It carries out the reaction nicotinate beta-D-ribonucleotide + ATP + H(+) = deamido-NAD(+) + diphosphate. It participates in cofactor biosynthesis; NAD(+) biosynthesis; deamido-NAD(+) from nicotinate D-ribonucleotide: step 1/1. Its function is as follows. Catalyzes the reversible adenylation of nicotinate mononucleotide (NaMN) to nicotinic acid adenine dinucleotide (NaAD). The chain is Probable nicotinate-nucleotide adenylyltransferase from Gluconobacter oxydans (strain 621H) (Gluconobacter suboxydans).